The chain runs to 58 residues: Large ribosomal subunit protein bL32 (58 aa).

This sequence belongs to the bacterial ribosomal protein bL32 family.

In Prochlorococcus marinus (strain MIT 9303), this protein is Large ribosomal subunit protein bL32.